The chain runs to 203 residues: Dephospho-CoA kinase (203 aa).

Residues 3–201 enclose the DPCK domain; that stretch reads SVGLTGGIGS…QRYLECAAAA (199 aa). Position 11 to 16 (11 to 16) interacts with ATP; sequence GSGKTT.

Belongs to the CoaE family.

It is found in the cytoplasm. The enzyme catalyses 3'-dephospho-CoA + ATP = ADP + CoA + H(+). Its pathway is cofactor biosynthesis; coenzyme A biosynthesis; CoA from (R)-pantothenate: step 5/5. Functionally, catalyzes the phosphorylation of the 3'-hydroxyl group of dephosphocoenzyme A to form coenzyme A. The chain is Dephospho-CoA kinase from Burkholderia pseudomallei (strain 1710b).